Consider the following 201-residue polypeptide: Dermatopontin (201 aa).

The N-terminal stretch at 1–18 (MDLSLLWVLLPLVTMAWG) is a signal peptide. At glutamine 19 the chain carries Pyrrolidone carboxylic acid. Tyrosine 23 bears the Sulfotyrosine mark. A run of 4 repeats spans residues 26–79 (PYQQ…ACMP), 70–75 (DRQWNY), 80–135 (TPQS…CCRY), and 125–130 (DREWQF). A 2 X 53-55 AA tandem repeats region spans residues 26–186 (PYQQYHDYSD…AVERDRQWKF (161 aa)). 5 disulfide bridges follow: cysteine 50/cysteine 77, cysteine 90/cysteine 132, cysteine 106/cysteine 133, cysteine 139/cysteine 196, and cysteine 143/cysteine 189. A 3 X 6 AA repeats of D-R-[EQ]-W-[NQK]-[FY] region spans residues 70–186 (DRQWNYACMP…AVERDRQWKF (117 aa)). 4 positions are modified to sulfotyrosine: tyrosine 162, tyrosine 164, tyrosine 166, and tyrosine 167. Residues 181-186 (DRQWKF) form a 3-3 repeat. Tyrosine 194 carries the post-translational modification Sulfotyrosine.

This sequence belongs to the dermatopontin family. As to quaternary structure, interacts with TGFB1, DCN and collagen. In terms of processing, sulfated on tyrosine residue(s). In terms of tissue distribution, expressed in fibroblasts, heart, skeletal muscle, brain and pancreas. Expressed at an intermediate level in lung and kidney, and at a low level in liver and placenta. Expressed at a lower level in fibroblasts from hypertrophic scar lesional skin and in fibroblasts from patients with systemic sclerosis than in normal skin fibroblasts.

The protein resides in the secreted. It localises to the extracellular space. It is found in the extracellular matrix. Seems to mediate adhesion by cell surface integrin binding. May serve as a communication link between the dermal fibroblast cell surface and its extracellular matrix environment. Enhances TGFB1 activity. Inhibits cell proliferation. Accelerates collagen fibril formation, and stabilizes collagen fibrils against low-temperature dissociation. This chain is Dermatopontin (DPT), found in Homo sapiens (Human).